Here is a 273-residue protein sequence, read N- to C-terminus: ATP synthase subunit a (273 aa).

Helical transmembrane passes span 44-64 (WHIDSLLFSVGLGVLFLWLFY), 104-124 (IAPLALTIFIWVFLMNFMDLI), 149-169 (DLNVTLGLSLSVFVLIVFYSI), 223-243 (LIFILIALMPWWAQFALSVPW), and 244-264 (AIFHILIIVLQAFIFMMLTIV).

The protein belongs to the ATPase A chain family. In terms of assembly, F-type ATPases have 2 components, CF(1) - the catalytic core - and CF(0) - the membrane proton channel. CF(1) has five subunits: alpha(3), beta(3), gamma(1), delta(1), epsilon(1). CF(0) has three main subunits: a(1), b(2) and c(9-12). The alpha and beta chains form an alternating ring which encloses part of the gamma chain. CF(1) is attached to CF(0) by a central stalk formed by the gamma and epsilon chains, while a peripheral stalk is formed by the delta and b chains.

Its subcellular location is the cell inner membrane. Functionally, key component of the proton channel; it plays a direct role in the translocation of protons across the membrane. The sequence is that of ATP synthase subunit a from Shewanella putrefaciens (strain CN-32 / ATCC BAA-453).